Reading from the N-terminus, the 131-residue chain is Profilin-9 (131 aa).

The cysteines at positions 13 and 115 are disulfide-linked. An Involved in PIP2 interaction motif is present at residues 81-97 (AVIRGKKGSGGITVKKT). Position 111 is a phosphothreonine (Thr111).

This sequence belongs to the profilin family. Occurs in many kinds of cells as a complex with monomeric actin in a 1:1 ratio. Phosphorylated by MAP kinases.

It is found in the cytoplasm. Its subcellular location is the cytoskeleton. Functionally, binds to actin and affects the structure of the cytoskeleton. At high concentrations, profilin prevents the polymerization of actin, whereas it enhances it at low concentrations. This chain is Profilin-9, found in Zea mays (Maize).